The chain runs to 674 residues: Xaa-Pro aminopeptidase 2 (674 aa).

An N-terminal signal peptide occupies residues 1 to 22; the sequence is MAQAYWQCYPWLVLLCACAWSY. An N-linked (GlcNAc...) asparagine glycan is attached at Asn65. Position 116 (Arg116) interacts with substrate. N-linked (GlcNAc...) asparagine glycosylation is found at Asn270, Asn278, and Asn293. His430 contacts substrate. Zn(2+)-binding residues include Asp450, Asp461, and His524. Positions 524, 533, and 555 each coordinate substrate. The Zn(2+) site is built by Glu555 and Glu569. The GPI-anchor amidated alanine moiety is linked to residue Ala650. Positions 651-674 are cleaved as a propeptide — removed in mature form; that stretch reads RAPHIISWTSLWVASALAILSWSS.

Belongs to the peptidase M24B family. Homotrimer. Requires Zn(2+) as cofactor. N-glycosylated. Strongly expressed in small intestine, heart and lung. Also detected in testis, skeletal muscle, spleen, liver, kidney, brain, uterus, eye, lymph node, thymus, stomach, prostate and bone marrow.

It is found in the cell membrane. The catalysed reaction is Release of any N-terminal amino acid, including proline, that is linked to proline, even from a dipeptide or tripeptide.. Functionally, membrane-bound metalloprotease which catalyzes the removal of a penultimate prolyl residue from the N-termini of peptides, such as Arg-Pro-Pro. May play a role in the metabolism of the vasodilator bradykinin. In Mus musculus (Mouse), this protein is Xaa-Pro aminopeptidase 2.